A 306-amino-acid polypeptide reads, in one-letter code: Ribosomal protein L11 methyltransferase (306 aa).

The S-adenosyl-L-methionine site is built by Thr152, Gly179, Asp201, and Asn243.

Belongs to the methyltransferase superfamily. PrmA family.

It is found in the cytoplasm. The enzyme catalyses L-lysyl-[protein] + 3 S-adenosyl-L-methionine = N(6),N(6),N(6)-trimethyl-L-lysyl-[protein] + 3 S-adenosyl-L-homocysteine + 3 H(+). Its function is as follows. Methylates ribosomal protein L11. The polypeptide is Ribosomal protein L11 methyltransferase (Geobacter sp. (strain M21)).